Here is a 323-residue protein sequence, read N- to C-terminus: NADH-cytochrome b5 reductase 2 (323 aa).

Residues 32 to 48 (LAPIYLGVGLIGLGVGL) traverse the membrane as a helical segment. Residues 72–177 (QGWVDLKLAQ…KGPIPKYPWE (106 aa)) enclose the FAD-binding FR-type domain. Residue 180–215 (KHKHICLIAGGTGITPMYQLARKIFKDPEDQTKVTL) participates in FAD binding.

The protein belongs to the flavoprotein pyridine nucleotide cytochrome reductase family. FAD serves as cofactor.

It is found in the mitochondrion outer membrane. The catalysed reaction is 2 Fe(III)-[cytochrome b5] + NADH = 2 Fe(II)-[cytochrome b5] + NAD(+) + H(+). May mediate the reduction of outer membrane cytochrome b5. The polypeptide is NADH-cytochrome b5 reductase 2 (mcr1) (Aspergillus fumigatus (strain ATCC MYA-4609 / CBS 101355 / FGSC A1100 / Af293) (Neosartorya fumigata)).